The following is a 592-amino-acid chain: Tetrathionate sensor histidine kinase TtrS (592 aa).

The next 2 helical transmembrane spans lie at 11–31 (VLAAVGLLCHGAWAGTWNIGI) and 307–327 (VGGVILAFLLLTLNYIWVMLL). A Histidine kinase domain is found at 364-581 (GFAHELNQPL…VVTIHFLHEN (218 aa)). The residue at position 367 (His-367) is a Phosphohistidine; by autocatalysis.

Autophosphorylated.

The protein localises to the cell inner membrane. It carries out the reaction ATP + protein L-histidine = ADP + protein N-phospho-L-histidine.. Its function is as follows. Member of the two-component regulatory system TtrR/TtrS, which is required for synthesis of tetrathionate reductase. Probably functions as a sensor protein kinase which is autophosphorylated at a histidine residue in response to tetrathionate, and transfers its phosphate group to TtrR. During mice infection, the ability to use tetrathionate as an electron acceptor is a growth advantage for S.typhimurium over the competing microbiota in the lumen of the inflamed gut. The sequence is that of Tetrathionate sensor histidine kinase TtrS (ttrS) from Salmonella typhimurium (strain LT2 / SGSC1412 / ATCC 700720).